Here is a 234-residue protein sequence, read N- to C-terminus: Biosynthetic peptidoglycan transglycosylase (234 aa).

Residues 11 to 31 (RFLLFAMLGFVGLSVLLVLVF) form a helical membrane-spanning segment.

This sequence belongs to the glycosyltransferase 51 family.

The protein resides in the cell inner membrane. The catalysed reaction is [GlcNAc-(1-&gt;4)-Mur2Ac(oyl-L-Ala-gamma-D-Glu-L-Lys-D-Ala-D-Ala)](n)-di-trans,octa-cis-undecaprenyl diphosphate + beta-D-GlcNAc-(1-&gt;4)-Mur2Ac(oyl-L-Ala-gamma-D-Glu-L-Lys-D-Ala-D-Ala)-di-trans,octa-cis-undecaprenyl diphosphate = [GlcNAc-(1-&gt;4)-Mur2Ac(oyl-L-Ala-gamma-D-Glu-L-Lys-D-Ala-D-Ala)](n+1)-di-trans,octa-cis-undecaprenyl diphosphate + di-trans,octa-cis-undecaprenyl diphosphate + H(+). It functions in the pathway cell wall biogenesis; peptidoglycan biosynthesis. Its function is as follows. Peptidoglycan polymerase that catalyzes glycan chain elongation from lipid-linked precursors. The protein is Biosynthetic peptidoglycan transglycosylase of Chromohalobacter salexigens (strain ATCC BAA-138 / DSM 3043 / CIP 106854 / NCIMB 13768 / 1H11).